The chain runs to 728 residues: Hepatocyte growth factor (728 aa).

Residues 1 to 32 form the signal peptide; it reads MMWGTKLLPVLLLQHVLLHLLLLPVTIPYAEG. A Pyrrolidone carboxylic acid modification is found at Q33. A PAN domain is found at 38–124; sequence NTLHEFKKSA…HEFDLYENKD (87 aa). 8 disulfide bridges follow: C71–C97, C75–C85, C129–C207, C150–C190, C178–C202, C212–C289, C233–C272, and C261–C284. 2 consecutive Kringle domains span residues 129–207 and 212–289; these read CIIG…IPQC and CMTC…IKMC. N295 is a glycosylation site (N-linked (GlcNAc...) asparagine). Disulfide bonds link C306–C384, C327–C366, C355–C378, C392–C470, C413–C453, C441–C465, C488–C607, C520–C536, C615–C682, C645–C661, and C672–C700. Kringle domains are found at residues 306 to 384 and 392 to 470; these read CIKG…IPKC and CYRG…ISRC. A glycan (N-linked (GlcNAc...) asparagine) is linked at N403. The 229-residue stretch at 496–724 folds into the Peptidase S1 domain; the sequence is VVNGIPTQTT…YAKWIHKVIL (229 aa). N-linked (GlcNAc...) asparagine glycans are attached at residues N569 and N656.

The protein belongs to the peptidase S1 family. Plasminogen subfamily. As to quaternary structure, dimer of an alpha chain and a beta chain linked by a disulfide bond. Interacts with SRPX2; the interaction increases HGF mitogenic activity. The single-chain precursor undergoes proteolytic processing by TMPRSS13 resulting in an active two-chain form. The single-chain precursor undergoes proteolytic processing by HGFAC resulting in an active two-chain form.

In terms of biological role, potent mitogen for mature parenchymal hepatocyte cells, seems to be a hepatotrophic factor, and acts as a growth factor for a broad spectrum of tissues and cell types. Activating ligand for the receptor tyrosine kinase MET by binding to it and promoting its dimerization. Activates MAPK signaling following TMPRSS13 cleavage and activation. This chain is Hepatocyte growth factor (Hgf), found in Rattus norvegicus (Rat).